A 292-amino-acid chain; its full sequence is Release factor glutamine methyltransferase (292 aa).

S-adenosyl-L-methionine-binding positions include 126–130, Asp-157, Trp-184, and Asn-198; that span reads GTGTG. A substrate-binding site is contributed by 198 to 201; sequence NPPY.

This sequence belongs to the protein N5-glutamine methyltransferase family. PrmC subfamily.

It carries out the reaction L-glutaminyl-[peptide chain release factor] + S-adenosyl-L-methionine = N(5)-methyl-L-glutaminyl-[peptide chain release factor] + S-adenosyl-L-homocysteine + H(+). In terms of biological role, methylates the class 1 translation termination release factors RF1/PrfA and RF2/PrfB on the glutamine residue of the universally conserved GGQ motif. In Haemophilus influenzae (strain ATCC 51907 / DSM 11121 / KW20 / Rd), this protein is Release factor glutamine methyltransferase.